The following is a 347-amino-acid chain: Protein RecA (347 aa).

Position 68–75 (68–75) interacts with ATP; the sequence is GPESSGKT.

Belongs to the RecA family.

It localises to the cytoplasm. Functionally, can catalyze the hydrolysis of ATP in the presence of single-stranded DNA, the ATP-dependent uptake of single-stranded DNA by duplex DNA, and the ATP-dependent hybridization of homologous single-stranded DNAs. It interacts with LexA causing its activation and leading to its autocatalytic cleavage. The chain is Protein RecA from Nocardia farcinica (strain IFM 10152).